A 654-amino-acid chain; its full sequence is 4-hydroxy-3-methylbut-2-en-1-yl diphosphate synthase (flavodoxin) (654 aa).

[4Fe-4S] cluster contacts are provided by C557, C560, C591, and E598.

This sequence belongs to the IspG family. The cofactor is [4Fe-4S] cluster.

The enzyme catalyses (2E)-4-hydroxy-3-methylbut-2-enyl diphosphate + oxidized [flavodoxin] + H2O + 2 H(+) = 2-C-methyl-D-erythritol 2,4-cyclic diphosphate + reduced [flavodoxin]. The protein operates within isoprenoid biosynthesis; isopentenyl diphosphate biosynthesis via DXP pathway; isopentenyl diphosphate from 1-deoxy-D-xylulose 5-phosphate: step 5/6. Functionally, converts 2C-methyl-D-erythritol 2,4-cyclodiphosphate (ME-2,4cPP) into 1-hydroxy-2-methyl-2-(E)-butenyl 4-diphosphate. In Protochlamydia amoebophila (strain UWE25), this protein is 4-hydroxy-3-methylbut-2-en-1-yl diphosphate synthase (flavodoxin).